The following is a 178-amino-acid chain: Interleukin-10 (178 aa).

An N-terminal signal peptide occupies residues 1 to 18; it reads MHSSALLCCLVLLTGVRA. 2 cysteine pairs are disulfide-bonded: cysteine 30–cysteine 126 and cysteine 80–cysteine 132. An N-linked (GlcNAc...) asparagine glycan is attached at asparagine 134.

It belongs to the IL-10 family. Homodimer. Interacts with IL10RA and IL10RB.

Its subcellular location is the secreted. Its function is as follows. Major immune regulatory cytokine that acts on many cells of the immune system where it has profound anti-inflammatory functions, limiting excessive tissue disruption caused by inflammation. Mechanistically, IL10 binds to its heterotetrameric receptor comprising IL10RA and IL10RB leading to JAK1 and STAT2-mediated phosphorylation of STAT3. In turn, STAT3 translocates to the nucleus where it drives expression of anti-inflammatory mediators. Targets antigen-presenting cells (APCs) such as macrophages and monocytes and inhibits their release of pro-inflammatory cytokines including granulocyte-macrophage colony-stimulating factor /GM-CSF, granulocyte colony-stimulating factor/G-CSF, IL-1 alpha, IL-1 beta, IL-6, IL-8 and TNF-alpha. Also interferes with antigen presentation by reducing the expression of MHC-class II and co-stimulatory molecules, thereby inhibiting their ability to induce T cell activation. In addition, controls the inflammatory response of macrophages by reprogramming essential metabolic pathways including mTOR signaling. The protein is Interleukin-10 (IL10) of Pan troglodytes (Chimpanzee).